The primary structure comprises 343 residues: Small ribosomal subunit biogenesis GTPase RsgA (343 aa).

A CP-type G domain is found at 116–275; the sequence is RGQLKPVAAN…LIDSPGIREF (160 aa). GTP-binding positions include 163 to 166 and 217 to 225; these read NKAD and GQSGVGKSS. Residues cysteine 299, cysteine 304, histidine 306, and cysteine 312 each coordinate Zn(2+).

Belongs to the TRAFAC class YlqF/YawG GTPase family. RsgA subfamily. As to quaternary structure, monomer. Associates with 30S ribosomal subunit, binds 16S rRNA. The cofactor is Zn(2+).

The protein resides in the cytoplasm. Its function is as follows. One of several proteins that assist in the late maturation steps of the functional core of the 30S ribosomal subunit. Helps release RbfA from mature subunits. May play a role in the assembly of ribosomal proteins into the subunit. Circularly permuted GTPase that catalyzes slow GTP hydrolysis, GTPase activity is stimulated by the 30S ribosomal subunit. This is Small ribosomal subunit biogenesis GTPase RsgA from Ectopseudomonas mendocina (strain ymp) (Pseudomonas mendocina).